The chain runs to 248 residues: MLYLHDVWVNWFEGEENGYNVCHFYEWRKDDTIELLDQVPLLKVDATLYHYIENELLELPQKMLKTYIIRLIFVKIMNVCSKSIALLLQNGKGIIAIDTIGYNVPIRKSRLIPRQEQMVYEMVENVQAEKYEFQVEETEKEHHILSPSPFIMNGLTRKERQLKQLLFMALDQLHTTKNTAEIRYWFTEWDPSAYGMVQHMEFEDIWAKLYDEAKTGWSDKHEQLCERLVKGQPFFEKLWEMENEQKVN.

It belongs to the UPF0736 family.

This is UPF0736 protein BC_1176 from Bacillus cereus (strain ATCC 14579 / DSM 31 / CCUG 7414 / JCM 2152 / NBRC 15305 / NCIMB 9373 / NCTC 2599 / NRRL B-3711).